The sequence spans 152 residues: MHFSKLSRRKKGKVPLPPLPTAPLPPHRPRMSGTWCPPVHNVPGLERNWYESCLRSHAAFCGCGDFVSHLNNLANRLGRPPAPRPPGAPQPPAVRALPALPAPEDRFPNPPGWPGPGGGAAGAGAAAGRDGGDGGDAEPGDEDLDALFAADE.

Over residues 1-13 (MHFSKLSRRKKGK) the composition is skewed to basic residues. Disordered regions lie at residues 1–28 (MHFS…PPHR) and 75–152 (NRLG…AADE). 2 stretches are compositionally biased toward pro residues: residues 15–26 (PLPPLPTAPLPP) and 80–92 (PPAP…PQPP). Acidic residues predominate over residues 133-152 (DGGDAEPGDEDLDALFAADE).

This is an uncharacterized protein from Pan troglodytes (Chimpanzee).